Consider the following 101-residue polypeptide: Large ribosomal subunit protein uL24 (101 aa).

Belongs to the universal ribosomal protein uL24 family. As to quaternary structure, part of the 50S ribosomal subunit.

Its function is as follows. One of two assembly initiator proteins, it binds directly to the 5'-end of the 23S rRNA, where it nucleates assembly of the 50S subunit. One of the proteins that surrounds the polypeptide exit tunnel on the outside of the subunit. The protein is Large ribosomal subunit protein uL24 of Paracoccus denitrificans (strain Pd 1222).